The primary structure comprises 133 residues: Heat shock protein 15 (133 aa).

The 63-residue stretch at 9–71 (VRLDKWLWAA…DERTVIVKAI (63 aa)) folds into the S4 RNA-binding domain. The tract at residues 105-133 (NALTMPHPDRRPDKKERRDLLRFKHGDSE) is disordered. The segment covering 111-133 (HPDRRPDKKERRDLLRFKHGDSE) has biased composition (basic and acidic residues).

It belongs to the HSP15 family. In terms of assembly, monomer.

Its function is as follows. Involved in the recycling of free 50S ribosomal subunits that still carry a nascent chain. Binds RNA more specifically than DNA. Binds with very high affinity to the free 50S ribosomal subunit. Does not bind it when it is part of the 70S ribosome. The polypeptide is Heat shock protein 15 (hslR) (Escherichia coli O157:H7).